Reading from the N-terminus, the 684-residue chain is Collagen alpha-3(IX) chain (684 aa).

The N-terminal stretch at 1–25 is a signal peptide; the sequence is MAGPRACAPLLLLLLLGELLAAAGA. Disordered stretches follow at residues 26-521 and 548-665; these read QRVG…KEAS and LAPG…CDTS. The segment at 29–519 is triple-helical region 3 (COL3); the sequence is GLPGPPGPPG…TGKPGVPGKE (491 aa). Composition is skewed to pro residues over residues 31 to 42 and 55 to 64; these read PGPPGPPGPPGK and PGLPGPPGPK. Residues 66–82 show a composition bias toward low complexity; the sequence is APGKPGKPGEAGLPGLP. A compositionally biased stretch (gly residues) spans 130–139; sequence GPPGGIGLRG. 2 stretches are compositionally biased toward pro residues: residues 140–161 and 177–188; these read PPGP…PPGH and ICPPGPPGPPGM. Residues 200–212 show a composition bias toward basic and acidic residues; the sequence is EQGEVGKDGEKGD. Positions 221–237 are enriched in low complexity; that stretch reads LPGSVGLQGPRGLRGLP. Basic and acidic residues-rich tracts occupy residues 264–282 and 344–356; these read AGDR…KGDL and SKGE…RAGE. The Cell attachment site motif lies at 423–425; the sequence is RGD. The N-linked (GlcNAc...) asparagine glycan is linked to asparagine 483. Residues 498-507 show a composition bias toward low complexity; the sequence is LGLQGVPGVP. Residues 520-550 form a nonhelical region 3 (NC3) region; the sequence is ASEQRIRELCGGMISEQIAQLAAHLRKPLAP. The tract at residues 551 to 630 is triple-helical region 2 (COL2); sequence GSIGRPGPAG…QGPQGVPGTS (80 aa). The segment covering 558-568 has biased composition (pro residues); sequence PAGPPGPPGPP. The span at 570 to 586 shows a compositional bias: low complexity; sequence SIGHPGARGPPGYRGPT. The Cell attachment site signature appears at 601–603; it reads RGD. Over residues 617 to 628 the composition is skewed to low complexity; that stretch reads DQGPQGPQGVPG. The interval 631-632 is nonhelical region 2 (NC2); sequence KD. Residues 633-661 form a triple-helical region 1 (COL1) region; it reads GQDGAPGEPGPPGDPGLPGAIGAQGTPGI. A nonhelical region 1 (NC1) region spans residues 662-684; that stretch reads CDTSACQGAVLGGVGEKSGSRSS.

The protein belongs to the fibril-associated collagens with interrupted helices (FACIT) family. As to quaternary structure, heterotrimer of an alpha 1(IX), an alpha 2(IX) and an alpha 3(IX) chain. Post-translationally, covalently linked to the telopeptides of type II collagen by lysine-derived cross-links. In terms of processing, prolines at the third position of the tripeptide repeating unit (G-X-Y) are hydroxylated in some or all of the chains.

It is found in the secreted. Its subcellular location is the extracellular space. It localises to the extracellular matrix. Its function is as follows. Structural component of hyaline cartilage and vitreous of the eye. The chain is Collagen alpha-3(IX) chain (COL9A3) from Homo sapiens (Human).